Here is a 30-residue protein sequence, read N- to C-terminus: 2-enoate reductase (30 aa).

Dodecamer; tetramer of trimers. It depends on iron-sulfur cluster as a cofactor. Requires FAD as cofactor. The cofactor is FMN.

The enzyme catalyses butanoate + NAD(+) = (2E)-2-butenoate + NADH + H(+). Involved in fermentation of amino acids (Stickland reaction) such as leucine, isoleucine, valine and phenylalanine. The polypeptide is 2-enoate reductase (Clostridium tyrobutyricum).